A 513-amino-acid polypeptide reads, in one-letter code: Cytochrome P450 705A1 (513 aa).

A helical transmembrane segment spans residues Gln-9–Phe-29. Cys-448 contacts heme.

The protein belongs to the cytochrome P450 family. The cofactor is heme. Expressed in root stele, root cortex, root epidermis, root pericycle of the root hair zone, and quiescent center at the root meristematic zone.

It is found in the membrane. Its function is as follows. Cleaves the arabidiol side chain at C15 to form 14-apo-arabidiol and a side-chain fragment. Involved in the biosynthesis of the volatile homoterpene (E)-4,8-dimethyl-1,3,7-nonatriene (DMNT) in roots. Involved in the production of DMNT by degrading the triterpene arabidiol. May be involved in the defense again the fungal root pathogen Pythium irregulare by producing DMNT. This Arabidopsis thaliana (Mouse-ear cress) protein is Cytochrome P450 705A1.